Reading from the N-terminus, the 394-residue chain is S-adenosylmethionine synthase (394 aa).

Mg(2+) is bound at residue Glu-10. Residue His-16 participates in ATP binding. A K(+)-binding site is contributed by Glu-44. Residues Glu-57 and Gln-100 each coordinate L-methionine. Residues 168–170, 236–239, Asp-247, 253–254, Ala-270, Lys-274, and Lys-278 contribute to the ATP site; these read DGK, SGRF, and RK. Position 247 (Asp-247) interacts with L-methionine. Lys-278 contacts L-methionine.

It belongs to the AdoMet synthase family. As to quaternary structure, homotetramer. Mn(2+) is required as a cofactor. Requires Mg(2+) as cofactor. It depends on Co(2+) as a cofactor. The cofactor is K(+).

The protein localises to the cytoplasm. It carries out the reaction L-methionine + ATP + H2O = S-adenosyl-L-methionine + phosphate + diphosphate. The protein operates within amino-acid biosynthesis; S-adenosyl-L-methionine biosynthesis; S-adenosyl-L-methionine from L-methionine: step 1/1. Functionally, catalyzes the formation of S-adenosylmethionine from methionine and ATP. The reaction comprises two steps that are both catalyzed by the same enzyme: formation of S-adenosylmethionine (AdoMet) and triphosphate, and subsequent hydrolysis of the triphosphate. This is S-adenosylmethionine synthase (METK) from Medicago truncatula (Barrel medic).